Reading from the N-terminus, the 343-residue chain is tRNA N6-adenosine threonylcarbamoyltransferase (343 aa).

Fe cation-binding residues include H120 and H124. Substrate is bound by residues 142–146, D175, G188, D192, and N281; that span reads VVSGG. A Fe cation-binding site is contributed by D310.

This sequence belongs to the KAE1 / TsaD family. It depends on Fe(2+) as a cofactor.

It localises to the cytoplasm. It catalyses the reaction L-threonylcarbamoyladenylate + adenosine(37) in tRNA = N(6)-L-threonylcarbamoyladenosine(37) in tRNA + AMP + H(+). Its function is as follows. Required for the formation of a threonylcarbamoyl group on adenosine at position 37 (t(6)A37) in tRNAs that read codons beginning with adenine. Is involved in the transfer of the threonylcarbamoyl moiety of threonylcarbamoyl-AMP (TC-AMP) to the N6 group of A37, together with TsaE and TsaB. TsaD likely plays a direct catalytic role in this reaction. The protein is tRNA N6-adenosine threonylcarbamoyltransferase of Bacillus thuringiensis (strain Al Hakam).